A 154-amino-acid polypeptide reads, in one-letter code: Lipoprotein signal peptidase (154 aa).

The next 2 membrane-spanning stretches (helical) occupy residues 55-75 (GQFW…VIYI) and 85-105 (AGVG…DRVF). Catalysis depends on residues aspartate 111 and aspartate 129. Residues 127–147 (VADSALTVGVILLFVHMFFFA) form a helical membrane-spanning segment.

Belongs to the peptidase A8 family.

Its subcellular location is the cell membrane. It carries out the reaction Release of signal peptides from bacterial membrane prolipoproteins. Hydrolyzes -Xaa-Yaa-Zaa-|-(S,diacylglyceryl)Cys-, in which Xaa is hydrophobic (preferably Leu), and Yaa (Ala or Ser) and Zaa (Gly or Ala) have small, neutral side chains.. The protein operates within protein modification; lipoprotein biosynthesis (signal peptide cleavage). This protein specifically catalyzes the removal of signal peptides from prolipoproteins. This chain is Lipoprotein signal peptidase, found in Geobacillus kaustophilus (strain HTA426).